We begin with the raw amino-acid sequence, 805 residues long: Sucrose synthase (805 aa).

The tract at residues 275 to 752 (MVFNVVILSP…GLQRIEEKYT (478 aa)) is GT-B glycosyltransferase.

The protein belongs to the glycosyltransferase 1 family. Plant sucrose synthase subfamily.

The enzyme catalyses an NDP-alpha-D-glucose + D-fructose = a ribonucleoside 5'-diphosphate + sucrose + H(+). Functionally, sucrose-cleaving enzyme that provides UDP-glucose and fructose for various metabolic pathways. The chain is Sucrose synthase (SS1) from Vigna radiata var. radiata (Mung bean).